A 407-amino-acid chain; its full sequence is Vancomycin aglycone glucosyltransferase (407 aa).

Belongs to the glycosyltransferase 28 family.

It carries out the reaction vancomycin aglycone + UDP-alpha-D-glucose = devancoaminyl-vancomycin + UDP. It participates in antibiotic biosynthesis; vancomycin biosynthesis. In terms of biological role, glucosyltransferase that transfers glucose to the 4-OH-Phegly(4) residue of vancomycin aglycone (AGV) to produce devancoaminyl-vancomycin (DVV) in the biosynthesis of glycopeptide antibiotic chloroeremomycin, a member of the vancomycin group of antibiotics. This chain is Vancomycin aglycone glucosyltransferase (gtfB), found in Amycolatopsis orientalis (Nocardia orientalis).